Reading from the N-terminus, the 227-residue chain is ATP-dependent Clp protease proteolytic subunit (227 aa).

Ser120 functions as the Nucleophile in the catalytic mechanism. His145 is a catalytic residue.

Belongs to the peptidase S14 family. In terms of assembly, fourteen ClpP subunits assemble into 2 heptameric rings which stack back to back to give a disk-like structure with a central cavity, resembling the structure of eukaryotic proteasomes.

Its subcellular location is the cytoplasm. The catalysed reaction is Hydrolysis of proteins to small peptides in the presence of ATP and magnesium. alpha-casein is the usual test substrate. In the absence of ATP, only oligopeptides shorter than five residues are hydrolyzed (such as succinyl-Leu-Tyr-|-NHMec, and Leu-Tyr-Leu-|-Tyr-Trp, in which cleavage of the -Tyr-|-Leu- and -Tyr-|-Trp bonds also occurs).. Cleaves peptides in various proteins in a process that requires ATP hydrolysis. Has a chymotrypsin-like activity. Plays a major role in the degradation of misfolded proteins. This chain is ATP-dependent Clp protease proteolytic subunit, found in Rickettsia bellii (strain RML369-C).